Reading from the N-terminus, the 136-residue chain is UPF0213 protein AHA_3736 (136 aa).

Residues 17–92 enclose the GIY-YIG domain; the sequence is SHWFIYMVRT…KQQSKAFKEQ (76 aa). Positions 114–136 are disordered; it reads QKRPRYAAAKEGSDNRECQRQVD. A compositionally biased stretch (basic and acidic residues) spans 124–136; that stretch reads EGSDNRECQRQVD.

This sequence belongs to the UPF0213 family.

This is UPF0213 protein AHA_3736 from Aeromonas hydrophila subsp. hydrophila (strain ATCC 7966 / DSM 30187 / BCRC 13018 / CCUG 14551 / JCM 1027 / KCTC 2358 / NCIMB 9240 / NCTC 8049).